Consider the following 509-residue polypeptide: Monofunctional riboflavin biosynthesis protein RIBA 3, chloroplastic (509 aa).

Residues 1 to 43 (MMDSALYHPRIFFAHSFINGLYSSPRFANTCWRLVSRSSWEIK) constitute a chloroplast transit peptide. The segment at 44 to 302 (ASENSDRNVF…LTDLIRYRRK (259 aa)) is inactive DHBP synthase. D-ribulose 5-phosphate is bound by residues 125–126 (GD) and 240–244 (RAGHT). Positions 303 to 509 (RDKLVERITV…ISDNNDQPLA (207 aa)) are GTP cyclohydrolase II. GTP is bound at residue 353-357 (RVHSE). Zn(2+) is bound by residues cysteine 358, cysteine 369, and cysteine 371. GTP contacts are provided by residues glutamine 374, 397–399 (EGR), and threonine 419. The Proton acceptor; for GTP cyclohydrolase activity role is filled by aspartate 431. Arginine 433 acts as the Nucleophile; for GTP cyclohydrolase activity in catalysis. GTP is bound by residues threonine 454 and lysine 459.

This sequence in the N-terminal section; belongs to the DHBP synthase family. In the C-terminal section; belongs to the GTP cyclohydrolase II family. Requires Zn(2+) as cofactor. In terms of tissue distribution, expressed in leaves, shoots, roots, flowers and siliques.

It localises to the plastid. The protein resides in the chloroplast. The enzyme catalyses GTP + 4 H2O = 2,5-diamino-6-hydroxy-4-(5-phosphoribosylamino)-pyrimidine + formate + 2 phosphate + 3 H(+). The protein operates within cofactor biosynthesis; riboflavin biosynthesis; 5-amino-6-(D-ribitylamino)uracil from GTP: step 1/4. Functionally, involved in riboflavin biosynthesis. Catalyzes the conversion of GTP to 2,5-diamino-6-ribosylamino-4(3H)-pyrimidinone 5'-phosphate (DARP), formate and pyrophosphate. RIBA2 and RIBA3 together are not able to complement the loss of function of RIBA1. The polypeptide is Monofunctional riboflavin biosynthesis protein RIBA 3, chloroplastic (RIBA3) (Arabidopsis thaliana (Mouse-ear cress)).